Consider the following 572-residue polypeptide: Hemagglutinin-neuraminidase (572 aa).

The Intravirion segment spans residues 1–31 (MEYWKHTNHGKDAGNELETSMATHGNKLTNK). The helical transmembrane segment at 32–52 (ITYILWTIILVLLSIVFIIVL) threads the bilayer. The Virion surface portion of the chain corresponds to 53 to 572 (INSIKSEKAH…FKTEIPKSCS (520 aa)). 2 disulfide bridges follow: cysteine 190–cysteine 214 and cysteine 256–cysteine 269. The tract at residues 252–257 (NRKSCS) is involved in neuraminidase activity. N-linked (GlcNAc...) asparagine; by host glycosylation is found at asparagine 308 and asparagine 351. 2 disulfides stabilise this stretch: cysteine 355–cysteine 469 and cysteine 463–cysteine 473. A glycan (N-linked (GlcNAc...) asparagine; by host) is linked at asparagine 523. Cysteine 535 and cysteine 544 form a disulfide bridge.

The protein belongs to the paramyxoviruses hemagglutinin-neuraminidase family. As to quaternary structure, homotetramer; composed of disulfide-linked homodimers. Interacts with F protein trimer.

The protein localises to the virion membrane. It is found in the host cell membrane. It catalyses the reaction Hydrolysis of alpha-(2-&gt;3)-, alpha-(2-&gt;6)-, alpha-(2-&gt;8)- glycosidic linkages of terminal sialic acid residues in oligosaccharides, glycoproteins, glycolipids, colominic acid and synthetic substrates.. Attaches the virus to sialic acid-containing cell receptors and thereby initiating infection. Binding of HN protein to the receptor induces a conformational change that allows the F protein to trigger virion/cell membranes fusion. Its function is as follows. Neuraminidase activity ensures the efficient spread of the virus by dissociating the mature virions from the neuraminic acid containing glycoproteins. The polypeptide is Hemagglutinin-neuraminidase (HN) (Homo sapiens (Human)).